The following is a 177-amino-acid chain: Inorganic pyrophosphatase (177 aa).

Substrate contacts are provided by Lys-29, Arg-43, and Tyr-55. Residues Asp-65, Asp-70, and Asp-102 each contribute to the Mg(2+) site. Tyr-141 contributes to the substrate binding site.

Belongs to the PPase family. As to quaternary structure, homohexamer. Mg(2+) is required as a cofactor.

The protein resides in the cytoplasm. The enzyme catalyses diphosphate + H2O = 2 phosphate + H(+). Functionally, catalyzes the hydrolysis of inorganic pyrophosphate (PPi) forming two phosphate ions. The polypeptide is Inorganic pyrophosphatase (Aquifex pyrophilus).